Consider the following 141-residue polypeptide: Holo-[acyl-carrier-protein] synthase (141 aa).

Mg(2+)-binding residues include D7 and E57.

Belongs to the P-Pant transferase superfamily. AcpS family. Mg(2+) serves as cofactor.

It localises to the cytoplasm. The catalysed reaction is apo-[ACP] + CoA = holo-[ACP] + adenosine 3',5'-bisphosphate + H(+). In terms of biological role, transfers the 4'-phosphopantetheine moiety from coenzyme A to a Ser of acyl-carrier-protein. The polypeptide is Holo-[acyl-carrier-protein] synthase (Corynebacterium efficiens (strain DSM 44549 / YS-314 / AJ 12310 / JCM 11189 / NBRC 100395)).